A 153-amino-acid chain; its full sequence is ORM1-like protein 3 (153 aa).

The segment at 1-17 (MNVGTAHSEVNPNTRVM) is important for ceramide level-sensing. The Cytoplasmic segment spans residues 1–21 (MNVGTAHSEVNPNTRVMNSRG). 2 helical membrane passes run 22–42 (IWLS…SIPF) and 43–63 (VSVP…MYIF). Over 64 to 94 (LHTVKGTPFETPDQGKARLLTHWEQMDYGVQ) the chain is Cytoplasmic. Residues 95-117 (FTASRKFLTITPIVLYFLTSFYT) traverse the membrane as a helical segment. Topologically, residues 118–121 (KYDQ) are extracellular. Residues 122–142 (IHFVLNTVSLMSVLIPKLPQL) traverse the membrane as a helical segment. A Hydroxyproline modification is found at Pro137. The Cytoplasmic portion of the chain corresponds to 143 to 153 (HGVRIFGINKY).

It belongs to the ORM family. As to quaternary structure, ceramide-sensitive subunit of the serine palmitoyltransferase (SPT) complex, which is also composed of SPTLC1, SPTLC2/3 and SPTSSA/B. When hydroxylated at Pro-137, ubiquitinated via 'Lys-48'-linkage, leading to proteasomal degradation. In endothelial cells, ORMDL3 proteasomal degradation is controlled by the sphingosine 1-phosphate receptor signaling pathway.

The protein localises to the endoplasmic reticulum membrane. Functionally, plays an essential role in the homeostatic regulation of sphingolipid de novo biosynthesis by modulating the activity of the serine palmitoyltransferase (SPT) in response to ceramide levels. When complexed to SPT, the binding of ceramides to its N-terminus stabilizes a conformation that block SPT substrate entry, hence preventing SPT catalytic activity. Through this mechanism, maintains ceramide levels at sufficient concentrations for the production of complex sphingolipids, but which prevents the accumulation of ceramides to levels that trigger apoptosis. The chain is ORM1-like protein 3 (ORMDL3) from Ailuropoda melanoleuca (Giant panda).